Reading from the N-terminus, the 990-residue chain is DNA ligase 4 (990 aa).

The tract at residues 57-84 is disordered; the sequence is TQKKGRQPPGPRRKAGPHGHSNLSPHEA. Positions 324, 326, 327, 331, 394, 436, 496, 501, 518, and 520 each coordinate ATP. The N6-AMP-lysine intermediate role is filled by lysine 326. Glutamate 394 provides a ligand contact to Mg(2+). A Mg(2+)-binding site is contributed by glutamate 496. 2 BRCT domains span residues 728–821 and 900–989; these read PQSK…LPYL and YMFS…RYQW.

It belongs to the ATP-dependent DNA ligase family. Requires Mg(2+) as cofactor.

The protein localises to the nucleus. It carries out the reaction ATP + (deoxyribonucleotide)n-3'-hydroxyl + 5'-phospho-(deoxyribonucleotide)m = (deoxyribonucleotide)n+m + AMP + diphosphate.. DNA ligase involved in DNA non-homologous end joining (NHEJ); required for double-strand break (DSB) repair. In Phaeosphaeria nodorum (strain SN15 / ATCC MYA-4574 / FGSC 10173) (Glume blotch fungus), this protein is DNA ligase 4 (LIG4).